The sequence spans 158 residues: 6,7-dimethyl-8-ribityllumazine synthase (158 aa).

Residues F23, 61–63, and 85–87 contribute to the 5-amino-6-(D-ribitylamino)uracil site; these read SME and AVI. Residue 90–91 coordinates (2S)-2-hydroxy-3-oxobutyl phosphate; it reads DT. Residue H93 is the Proton donor of the active site. Residue Y118 participates in 5-amino-6-(D-ribitylamino)uracil binding. R132 is a binding site for (2S)-2-hydroxy-3-oxobutyl phosphate.

The protein belongs to the DMRL synthase family.

The catalysed reaction is (2S)-2-hydroxy-3-oxobutyl phosphate + 5-amino-6-(D-ribitylamino)uracil = 6,7-dimethyl-8-(1-D-ribityl)lumazine + phosphate + 2 H2O + H(+). Its pathway is cofactor biosynthesis; riboflavin biosynthesis; riboflavin from 2-hydroxy-3-oxobutyl phosphate and 5-amino-6-(D-ribitylamino)uracil: step 1/2. Its function is as follows. Catalyzes the formation of 6,7-dimethyl-8-ribityllumazine by condensation of 5-amino-6-(D-ribitylamino)uracil with 3,4-dihydroxy-2-butanone 4-phosphate. This is the penultimate step in the biosynthesis of riboflavin. The chain is 6,7-dimethyl-8-ribityllumazine synthase from Prochlorococcus marinus (strain MIT 9211).